The sequence spans 66 residues: Large ribosomal subunit protein bL33c (66 aa).

It belongs to the bacterial ribosomal protein bL33 family.

It localises to the plastid. Its subcellular location is the chloroplast. The chain is Large ribosomal subunit protein bL33c from Carica papaya (Papaya).